The following is a 515-amino-acid chain: Maturase K (515 aa).

It belongs to the intron maturase 2 family. MatK subfamily.

Its subcellular location is the plastid. It localises to the chloroplast. Usually encoded in the trnK tRNA gene intron. Probably assists in splicing its own and other chloroplast group II introns. This is Maturase K from Pinus patula (Mexican weeping pine).